A 430-amino-acid chain; its full sequence is BSD domain-containing protein 1 (430 aa).

2 positions are modified to phosphoserine: S92 and S166. The region spanning W146 to E198 is the BSD domain. 2 disordered regions span residues S247–A298 and L319–D398. The segment covering P276 to N291 has biased composition (polar residues). Residues P350–V367 show a composition bias toward basic and acidic residues. The residue at position 356 (T356) is a Phosphothreonine. Positions N371–D390 are enriched in polar residues. Phosphoserine occurs at positions 387, 388, and 418.

This Homo sapiens (Human) protein is BSD domain-containing protein 1 (BSDC1).